Reading from the N-terminus, the 821-residue chain is uncharacterized protein (821 aa).

Disordered stretches follow at residues M1 to S20, S55 to S96, S134 to H205, R240 to W263, P274 to N293, N360 to S381, T430 to R450, E467 to F497, R512 to T535, and A549 to T641. 2 stretches are compositionally biased toward polar residues: residues Y58–Q88 and S185–N203. Residues N279–N293 show a composition bias toward polar residues. Polar residues predominate over residues T437 to R450. 2 stretches are compositionally biased toward low complexity: residues T517 to S529 and S568 to S578. Over residues Q579–R622 the composition is skewed to polar residues. Residues C766–R809 form an RING-type; atypical zinc finger.

This is an uncharacterized protein from Schizosaccharomyces pombe (strain 972 / ATCC 24843) (Fission yeast).